The following is a 410-amino-acid chain: MPRFFTRHAATLFFPMALILYDFAAYLSTDLIQPGIINVVRDFNADVSLAPAAVSLYLAGGMALQWLLGPLSDRIGRRPVLITGALIFTLACAATMFTTSMTQFLIARAIQGTSICFIATVGYVTVQEAFGQTKGIKLMAIITSIVLIAPIIGPLSGAALMHFMHWKVLFAIIAVMGFISFVGLLLAMPETVKRGAVPFSAKSVLRDFRNVFCNRLFLFGAATISLSYIPMMSWVAVSPVILIDAGSLTTSQFAWTQVPVFGAVIVANAIVARFVKDPTEPRFIWRAVPIQLVGLSLLIVGNLLSPHVWLWSVLGTSLYAFGIGLIFPTLFRFTLFSNKLPKGTVSASLNMVILMVMSVSVEIGRWLWFNGGRLPFHLLAVVAGVIVVFTLAGLLNRVRQHQAAELVEEQ.

Residues 1-11 are Cytoplasmic-facing; sequence MPRFFTRHAAT. Residues 12 to 32 form a helical membrane-spanning segment; sequence LFFPMALILYDFAAYLSTDLI. Over 33 to 48 the chain is Periplasmic; that stretch reads QPGIINVVRDFNADVS. A helical membrane pass occupies residues 49 to 69; the sequence is LAPAAVSLYLAGGMALQWLLG. The Cytoplasmic segment spans residues 70–78; that stretch reads PLSDRIGRR. Residues 79–99 form a helical membrane-spanning segment; it reads PVLITGALIFTLACAATMFTT. Over 100–103 the chain is Periplasmic; it reads SMTQ. The chain crosses the membrane as a helical span at residues 104–124; it reads FLIARAIQGTSICFIATVGYV. At 125 to 140 the chain is on the cytoplasmic side; that stretch reads TVQEAFGQTKGIKLMA. Residues 141 to 161 form a helical membrane-spanning segment; sequence IITSIVLIAPIIGPLSGAALM. The Periplasmic portion of the chain corresponds to 162–167; the sequence is HFMHWK. A helical transmembrane segment spans residues 168–188; it reads VLFAIIAVMGFISFVGLLLAM. The Cytoplasmic segment spans residues 189-216; sequence PETVKRGAVPFSAKSVLRDFRNVFCNRL. The chain crosses the membrane as a helical span at residues 217 to 237; it reads FLFGAATISLSYIPMMSWVAV. The Periplasmic segment spans residues 238–251; sequence SPVILIDAGSLTTS. Residues 252-272 traverse the membrane as a helical segment; that stretch reads QFAWTQVPVFGAVIVANAIVA. Residues 273–282 are Cytoplasmic-facing; the sequence is RFVKDPTEPR. The helical transmembrane segment at 283-303 threads the bilayer; that stretch reads FIWRAVPIQLVGLSLLIVGNL. The Periplasmic portion of the chain corresponds to 304 to 307; sequence LSPH. The chain crosses the membrane as a helical span at residues 308-328; the sequence is VWLWSVLGTSLYAFGIGLIFP. The Cytoplasmic segment spans residues 329 to 348; sequence TLFRFTLFSNKLPKGTVSAS. The helical transmembrane segment at 349 to 369 threads the bilayer; it reads LNMVILMVMSVSVEIGRWLWF. Residues 370 to 373 are Periplasmic-facing; sequence NGGR. The helical transmembrane segment at 374–394 threads the bilayer; the sequence is LPFHLLAVVAGVIVVFTLAGL. At 395-410 the chain is on the cytoplasmic side; the sequence is LNRVRQHQAAELVEEQ.

This sequence belongs to the major facilitator superfamily. In terms of assembly, monomer.

The protein resides in the cell inner membrane. The enzyme catalyses Na(+)(in) + 2 H(+)(out) = Na(+)(out) + 2 H(+)(in). The catalysed reaction is K(+)(in) + H(+)(out) = K(+)(out) + H(+)(in). Efflux is inhibited by the ionophore carbonyl cyanide 3-chlorophenylhydrazone (CCCP). In terms of biological role, proton-dependent efflux pump. Confers resistance to a broad spectrum of chemically unrelated substrates. Overexpression confers resistance to acriflavine, chloramphenicol, norfloxacin, ethidium bromide and tetraphenylphosphonium bromide (TPP). Can also export a broad range of quaternary ammonium compounds (QACs) and contribute to the intrinsic resistance of E.coli to these antimicrobial compounds. In addition to its role in multidrug resistance, MdtM likely plays a physiological role in alkaline pH homeostasis and in resistance to bile salts. May function in alkaline pH homeostasis when millimolar concentrations of sodium or potassium are present in the growth medium. When overexpressed, can confer a tolerance to alkaline pH values up to 9.75. Probably acts as a low-affinity antiporter that catalyzes the exchange of internal Na(+) and K(+) cations for extracellular protons to maintain a stable internal pH, acid relative to outside, during exposure to alkaline environments. Can also catalyze Rb(+)/H(+) and Li(+)/H(+) antiport, but not Ca(2+)/H(+) exchange. The exact stoichiometry of antiport is unknown. Finally, it could contribute to bile salt resistance by catalyzing the transport of bile salts out of the cell cytoplasm. Mediates a bile salt/H(+) exchange driven by the electrochemical gradient. Binds to cholate and deoxycholate with micromolar affinity and catalyzes both cholate/H(+) and deoxycholate/H(+) exchange reactions. This Escherichia coli (strain K12) protein is Multidrug resistance protein MdtM.